A 358-amino-acid polypeptide reads, in one-letter code: Trace amine-associated receptor 7h (358 aa).

Topologically, residues M1–R47 are extracellular. N34 carries an N-linked (GlcNAc...) asparagine glycan. 2 cysteine pairs are disulfide-bonded: C37–C201 and C120–C205. A helical membrane pass occupies residues L48–V68. The Cytoplasmic portion of the chain corresponds to M69–N83. Residues F84–S104 traverse the membrane as a helical segment. Residues M105–S125 lie on the Extracellular side of the membrane. The chain crosses the membrane as a helical span at residues F126 to V143. At D144–K166 the chain is on the cytoplasmic side. The chain crosses the membrane as a helical span at residues C167 to A187. Topologically, residues S188 to N217 are extracellular. N210 is a glycosylation site (N-linked (GlcNAc...) asparagine). The chain crosses the membrane as a helical span at residues F218 to I238. Topologically, residues A239–T274 are cytoplasmic. The helical transmembrane segment at L275–I295 threads the bilayer. Over D296 to E309 the chain is Extracellular. Residues I310–F333 form a helical membrane-spanning segment. Over R334–E358 the chain is Cytoplasmic.

It belongs to the G-protein coupled receptor 1 family.

The protein localises to the cell membrane. Olfactory receptor specific for N,N-dimethylalkylamines trace amines. Trace amine compounds are enriched in animal body fluids and act on trace amine-associated receptors (TAARs) to elicit both intraspecific and interspecific innate behaviors. Ligand-binding causes a conformation change that triggers signaling via G(s)-class of G alpha proteins (GNAL or GNAS). The chain is Trace amine-associated receptor 7h from Rattus norvegicus (Rat).